The sequence spans 284 residues: tRNA-cytidine(32) 2-sulfurtransferase (284 aa).

Positions 45-50 (SGGKDS) match the PP-loop motif motif. C120, C123, and C211 together coordinate [4Fe-4S] cluster.

The protein belongs to the TtcA family. In terms of assembly, homodimer. It depends on Mg(2+) as a cofactor. [4Fe-4S] cluster is required as a cofactor.

The protein localises to the cytoplasm. The enzyme catalyses cytidine(32) in tRNA + S-sulfanyl-L-cysteinyl-[cysteine desulfurase] + AH2 + ATP = 2-thiocytidine(32) in tRNA + L-cysteinyl-[cysteine desulfurase] + A + AMP + diphosphate + H(+). It participates in tRNA modification. Functionally, catalyzes the ATP-dependent 2-thiolation of cytidine in position 32 of tRNA, to form 2-thiocytidine (s(2)C32). The sulfur atoms are provided by the cysteine/cysteine desulfurase (IscS) system. The protein is tRNA-cytidine(32) 2-sulfurtransferase of Alcanivorax borkumensis (strain ATCC 700651 / DSM 11573 / NCIMB 13689 / SK2).